The primary structure comprises 1065 residues: Putative guanine nucleotide-exchange factor SED4 (1065 aa).

At 1 to 346 the chain is on the cytoplasmic side; the sequence is MSGNSANYDV…SSSILRNIWK (346 aa). The residue at position 65 (Ser65) is a Phosphoserine. WD repeat units lie at residues 259-298 and 302-341; these read FDLN…LVQL and VHES…SSIL. A helical; Signal-anchor for type II membrane protein membrane pass occupies residues 347–365; it reads FFLNFVLLVVLAGAIQLGY. Over 366-1065 the chain is Lumenal; that stretch reads KHNVHGFIYK…VNYAGLHDEL (700 aa). Asn388 carries N-linked (GlcNAc...) asparagine glycosylation. Disordered stretches follow at residues 458-477, 482-520, and 551-625; these read TSAD…SSSF, VTNE…SESI, and QSES…SFLD. Low complexity predominate over residues 465–476; the sequence is SASSSSSSSSSS. Positions 482–495 are enriched in polar residues; sequence VTNEPIVSSPTSEI. Residues 568–621 show a composition bias toward low complexity; sequence STESPSLSHMPSSSSSSLSLSSSLTTSPTTALSTSTATAVTTTQTNPTNDAANT. N-linked (GlcNAc...) asparagine glycosylation occurs at Asn620. Repeat copies occupy residues 824–833, 834–843, 844–853, and 854–863. The segment at 824–863 is 4 X 10 AA tandem repeats; it reads IDNSEYTSVLADNLEPTSVLADNSEPTSVLADSSEPTSVF. The N-linked (GlcNAc...) asparagine glycan is linked to Asn1039. The Prevents secretion from ER signature appears at 1062-1065; the sequence is HDEL.

It belongs to the WD repeat SEC12 family.

It is found in the endoplasmic reticulum membrane. The protein resides in the golgi apparatus membrane. Its function is as follows. Putative guanine nucleotide-exchange factor (GEF) involved in the formation or budding of transport vesicles from the ER. Positive regulator of SAR1 probably through inhibition of the GTPase activation by SEC23. This chain is Putative guanine nucleotide-exchange factor SED4 (SED4), found in Saccharomyces cerevisiae (strain ATCC 204508 / S288c) (Baker's yeast).